Consider the following 67-residue polypeptide: Protein LITTLE ZIPPER 3 (67 aa).

Residues 14-59 (YIMKENERLRKKAELLNQENQQLLFQLKQKLSKTKNSNNGSNNDNK) adopt a coiled-coil conformation. The disordered stretch occupies residues 42 to 67 (QKLSKTKNSNNGSNNDNKSSSASGQS).

As to quaternary structure, interacts with REV. Interacts with ATBH-8, ATBH-9, ATB-14 and ATB-15. Expressed in the adaxial epidermis of the cotyledons and leaves, and in the vascular cylinder of wild-type torpedo stage embryos. Confined in the central zone and the organizing center in the shoot apical meristem.

It is found in the nucleus. Its function is as follows. Competitive inhibitor of the HD-ZIPIII transcription factors in shoot apical meristem (SAM) development. Acts by forming non-functional heterodimers. Part of a negative feedback loop. Involved in SAM development and lateral organ patterning. Essential for proper functioning of stem cells in the SAM. The polypeptide is Protein LITTLE ZIPPER 3 (Arabidopsis thaliana (Mouse-ear cress)).